A 490-amino-acid polypeptide reads, in one-letter code: Dipeptide and tripeptide permease A (490 aa).

Topologically, residues 1–34 (MSNANNNQPENVSLNAFKQPRAFYLIFSIELWER) are cytoplasmic. Residues 35-55 (FGYYGLQGIMAVYLVKMLGMT) form a helical membrane-spanning segment. Topologically, residues 56–59 (EADS) are periplasmic. A helical transmembrane segment spans residues 60-80 (ITLFSSFSALVYGFVAIGGWL). The Cytoplasmic segment spans residues 81–89 (GDKVLGAKR). A helical transmembrane segment spans residues 90–110 (VIMLGALVLAIGYAFVAYSGH). A topological domain (periplasmic) is located at residue D111. The helical transmembrane segment at 112–132 (LSLVYVGMATIAVGNGLFKAN) threads the bilayer. Over 133–153 (PSSLLSTCYEKNDPRLDGAFT) the chain is Cytoplasmic. Residues 154–174 (MYYMSVNIGSFFSMLATPWLA) traverse the membrane as a helical segment. Topologically, residues 175–176 (AR) are periplasmic. The helical transmembrane segment at 177 to 197 (FGWSVAFSLSVVGMLITLVNF) threads the bilayer. Residues 198–217 (MMCRRWVKDQGSKPDFAPLQ) are Cytoplasmic-facing. Residues 218–238 (VGKLMMTLVGVVILVAISTWL) traverse the membrane as a helical segment. Topologically, residues 239–246 (LHNQTIAR) are periplasmic. The helical transmembrane segment at 247 to 267 (WALAIISAGIILIFAKETFAL) threads the bilayer. At 268 to 274 (QGGARRK) the chain is on the cytoplasmic side. A helical transmembrane segment spans residues 275–295 (MIVAFLLMLEAVVFFVLYSQM). The Periplasmic segment spans residues 296–320 (PTSLNFFAIHNVEHSIFGIAFEPEQ). Residues 321 to 341 (YQALNPFWIMVASPILAAIYN) form a helical membrane-spanning segment. Residues 342-352 (KMGDRLPMPHK) are Cytoplasmic-facing. Residues 353 to 373 (FAIGMVLCSGAFLVLPWGASF) traverse the membrane as a helical segment. The Periplasmic segment spans residues 374–383 (ANEAGIVSVN). The chain crosses the membrane as a helical span at residues 384-404 (WLILSYALQSIGELMISGLGL). Topologically, residues 405–414 (AMVAQLVPQR) are cytoplasmic. Residues 415 to 435 (LMGFIMGSWFLTTAAAALIAG) form a helical membrane-spanning segment. The Periplasmic segment spans residues 436–460 (KVAALTAVPGGEVADPHASLAIYSH). The helical transmembrane segment at 461-481 (VFMQIGLATAVIAVLMLLTAP) threads the bilayer. Residues 482-490 (KLNRMTLGD) are Cytoplasmic-facing.

The protein belongs to the major facilitator superfamily. Proton-dependent oligopeptide transporter (POT/PTR) (TC 2.A.17) family. DtpA subfamily.

Its subcellular location is the cell inner membrane. Its function is as follows. Proton-dependent permease that transports di- and tripeptides. This is Dipeptide and tripeptide permease A from Edwardsiella piscicida.